The primary structure comprises 372 residues: Tribbles homolog 1 (372 aa).

2 disordered regions span residues 1–23 and 52–86; these read MRVG…ALLF and ECSS…GSAP. Over residues 59–75 the composition is skewed to pro residues; that stretch reads YLSPPGSPCSPQPPPAA. The Protein kinase domain maps to 91–338; that stretch reads IADYLLLPLA…APEILLHPWF (248 aa). Residues 355–360 carry the COP1-binding motif; that stretch reads DQIVPE.

The protein belongs to the protein kinase superfamily. CAMK Ser/Thr protein kinase family. Tribbles subfamily. In terms of assembly, monomer. Interacts (via protein kinase domain) with CEBPA. Interacts with COP1. In terms of tissue distribution, expressed in most human tissues with the highest levels in skeletal muscle, thyroid gland, pancreas, peripheral blood leukocytes, and bone marrow.

Functionally, adapter protein involved in protein degradation by interacting with COP1 ubiquitin ligase. The COP1-binding motif is masked by autoinhibitory interactions with the protein kinase domain. Serves to alter COP1 substrate specificity by directing the activity of COP1 toward CEBPA. Binds selectively the recognition sequence of CEBPA. Regulates myeloid cell differentiation by altering the expression of CEBPA in a COP1-dependent manner. Controls macrophage, eosinophil and neutrophil differentiation via the COP1-binding domain. Interacts with MAPK kinases and regulates activation of MAP kinases, but has no kinase activity. This chain is Tribbles homolog 1, found in Homo sapiens (Human).